Here is a 387-residue protein sequence, read N- to C-terminus: 8-amino-7-oxononanoate synthase (387 aa).

Residue arginine 19 coordinates substrate. Residue 106-107 (GY) participates in pyridoxal 5'-phosphate binding. Residue histidine 131 coordinates substrate. The pyridoxal 5'-phosphate site is built by serine 177, histidine 205, and threonine 236. At lysine 239 the chain carries N6-(pyridoxal phosphate)lysine. Threonine 353 contributes to the substrate binding site.

It belongs to the class-II pyridoxal-phosphate-dependent aminotransferase family. BioF subfamily. In terms of assembly, homodimer. It depends on pyridoxal 5'-phosphate as a cofactor.

The catalysed reaction is 6-carboxyhexanoyl-[ACP] + L-alanine + H(+) = (8S)-8-amino-7-oxononanoate + holo-[ACP] + CO2. It participates in cofactor biosynthesis; biotin biosynthesis. Catalyzes the decarboxylative condensation of pimeloyl-[acyl-carrier protein] and L-alanine to produce 8-amino-7-oxononanoate (AON), [acyl-carrier protein], and carbon dioxide. This chain is 8-amino-7-oxononanoate synthase, found in Nitrosomonas eutropha (strain DSM 101675 / C91 / Nm57).